The following is an 867-amino-acid chain: MIIRTLRSQLRLPKPVYISPPCRYYSTDLEKLKKESDTTESDNSASATGVIDKTHNEVLLYYDHIYPFTTSRNVVKQYLSRFSLPWSTAYDDEKLKQKVWDLSSPLETTAKITEFVPLRRDCGAFVKFKYPPEVPATKFIEEIRENVEKNEQERVNSNILTKLYHQIWRNVPKVYSVKGTPWIEDLRRFPSPKLSVKFEGDPLTEEELYVLFRRYGLINEIEPGATEAFIYFHSTRAAISAKHCITGMVLNGGKTTLHIQFVAIKRSNFLVSLISNHTKIAIPVLIALLATFAVLIFDPIREWFIEYKILHNRKSFDQFKESRWFKYLYIPYRTITGWVYSSYDYIDSQIQEVTGSSCSEEDDSSNGSNIVDGQSVRDLKNESNMFWIERYEKSKQLQLWIMENANTFIIVKGPQGSGKEEFVLEHSLGSDERLNKKVLVLECDQLGKARSDNNLINTTASQLGYFPVFTWTNTVSRFVDLGVQGLTGQKSGLSESKETQIKNMFSLATQAIRKITTNEYNKYVKSVERRNKRLKDDEKIEVLKEEQFLQQHPEAKPIIVLNKYSRRADVSSNDFIPPLVADWASGLVQNNTAHVIFLTADVGSLQLLNDALPNQVFKDISLSDASMSSSRQYVCDVLKVKDTSTLDECLEPLGGRMLDLQSFIRRIKSGESPQQAINEMISQAAELINTFFLNSHHKFGAGDSNWDPSQVWLIMKLLSECDTINYSELVKSPLFKVSKETLEILTTLEKYDLISLKRDKGVLDKISTGRPLFKAAFANIISDLRIWKLYETEYIGRLISLEAAKIQKLEEELEKIYKIGKVDGRIDYVSQKIEASNKKILDLEKQAADVASYTGKPDGKSFLGIKF.

The transit peptide at 1–25 (MIIRTLRSQLRLPKPVYISPPCRYY) directs the protein to the mitochondrion. The Mitochondrial matrix portion of the chain corresponds to 26 to 279 (STDLEKLKKE…LVSLISNHTK (254 aa)). Residues 179–264 (GTPWIEDLRR…TTLHIQFVAI (86 aa)) form the RRM domain. Residues 280-300 (IAIPVLIALLATFAVLIFDPI) form a helical membrane-spanning segment. Residues 301-867 (REWFIEYKIL…DGKSFLGIKF (567 aa)) lie on the Mitochondrial intermembrane side of the membrane. The stretch at 795–852 (IGRLISLEAAKIQKLEEELEKIYKIGKVDGRIDYVSQKIEASNKKILDLEKQAADVAS) forms a coiled coil.

It belongs to the YME2 family.

It is found in the mitochondrion inner membrane. In terms of biological role, plays a role in maintaining the mitochondrial genome and in controlling the mtDNA escape. Involved in the regulation of mtDNA nucleotide structure and number. May have a dispensable role in early maturation of pre-rRNA. This chain is Mitochondrial escape protein 2 (PRP13), found in Candida albicans (strain SC5314 / ATCC MYA-2876) (Yeast).